We begin with the raw amino-acid sequence, 135 residues long: Large ribosomal subunit protein uL16c (135 aa).

Belongs to the universal ribosomal protein uL16 family. Part of the 50S ribosomal subunit.

The protein localises to the plastid. It localises to the chloroplast. This Cucumis sativus (Cucumber) protein is Large ribosomal subunit protein uL16c.